Reading from the N-terminus, the 282-residue chain is 2-dehydro-3-deoxyphosphooctonate aldolase (282 aa).

This sequence belongs to the KdsA family.

It localises to the cytoplasm. It carries out the reaction D-arabinose 5-phosphate + phosphoenolpyruvate + H2O = 3-deoxy-alpha-D-manno-2-octulosonate-8-phosphate + phosphate. Its pathway is carbohydrate biosynthesis; 3-deoxy-D-manno-octulosonate biosynthesis; 3-deoxy-D-manno-octulosonate from D-ribulose 5-phosphate: step 2/3. It participates in bacterial outer membrane biogenesis; lipopolysaccharide biosynthesis. The polypeptide is 2-dehydro-3-deoxyphosphooctonate aldolase (Shewanella piezotolerans (strain WP3 / JCM 13877)).